The chain runs to 239 residues: tRNA (guanine-N(7)-)-methyltransferase (239 aa).

Glu-68, Glu-93, Asp-120, and Asp-143 together coordinate S-adenosyl-L-methionine. Asp-143 is a catalytic residue. Residues Lys-147, Asp-180, and 217-220 each bind substrate; that span reads TKFE.

It belongs to the class I-like SAM-binding methyltransferase superfamily. TrmB family.

It carries out the reaction guanosine(46) in tRNA + S-adenosyl-L-methionine = N(7)-methylguanosine(46) in tRNA + S-adenosyl-L-homocysteine. The protein operates within tRNA modification; N(7)-methylguanine-tRNA biosynthesis. In terms of biological role, catalyzes the formation of N(7)-methylguanine at position 46 (m7G46) in tRNA. The polypeptide is tRNA (guanine-N(7)-)-methyltransferase (Vibrio cholerae serotype O1 (strain ATCC 39541 / Classical Ogawa 395 / O395)).